The chain runs to 204 residues: Probable proteasome subunit beta type-3 (204 aa).

The protein belongs to the peptidase T1B family. As to quaternary structure, the 26S proteasome consists of a 20S proteasome core and two 19S regulatory subunits. The 20S proteasome core is composed of 28 subunits that are arranged in four stacked rings, resulting in a barrel-shaped structure. The two end rings are each formed by seven alpha subunits, and the two central rings are each formed by seven beta subunits. The catalytic chamber with the active sites is on the inside of the barrel.

It localises to the cytoplasm. Its subcellular location is the nucleus. Its function is as follows. Non-catalytic component of the proteasome, a multicatalytic proteinase complex which is characterized by its ability to cleave peptides with Arg, Phe, Tyr, Leu, and Glu adjacent to the leaving group at neutral or slightly basic pH. The proteasome has an ATP-dependent proteolytic activity. This chain is Probable proteasome subunit beta type-3 (pup3), found in Schizosaccharomyces pombe (strain 972 / ATCC 24843) (Fission yeast).